A 512-amino-acid chain; its full sequence is RCC1 domain-containing protein DDB_G0279253 (512 aa).

8 RCC1 repeats span residues 1–56, 58–134, 135–185, 197–248, 249–319, 321–384, 386–443, and 454–512; these read MKIY…MIID, GDLY…ACDN, NGNI…NNNN, SGGV…ALSS, ENDV…LLDI, FKNV…LLTN, DKLY…IQVY, and NNNI…FILP. Over residues 66 to 77 the composition is skewed to polar residues; that stretch reads NDSGQLGINSNE. 2 disordered regions span residues 66–85 and 162–200; these read NDSG…QQQQ and STSN…SGGV. The span at 162-196 shows a compositional bias: low complexity; the sequence is STSNNKNNNNNNNNNNNNNNNNNNNNNNNNNNNNN.

The protein is RCC1 domain-containing protein DDB_G0279253 of Dictyostelium discoideum (Social amoeba).